Reading from the N-terminus, the 149-residue chain is D-aminoacyl-tRNA deacylase (149 aa).

The Gly-cisPro motif, important for rejection of L-amino acids signature appears at 137–138; the sequence is GP.

This sequence belongs to the DTD family. Homodimer.

It localises to the cytoplasm. It carries out the reaction glycyl-tRNA(Ala) + H2O = tRNA(Ala) + glycine + H(+). The catalysed reaction is a D-aminoacyl-tRNA + H2O = a tRNA + a D-alpha-amino acid + H(+). Functionally, an aminoacyl-tRNA editing enzyme that deacylates mischarged D-aminoacyl-tRNAs. Also deacylates mischarged glycyl-tRNA(Ala), protecting cells against glycine mischarging by AlaRS. Acts via tRNA-based rather than protein-based catalysis; rejects L-amino acids rather than detecting D-amino acids in the active site. By recycling D-aminoacyl-tRNA to D-amino acids and free tRNA molecules, this enzyme counteracts the toxicity associated with the formation of D-aminoacyl-tRNA entities in vivo and helps enforce protein L-homochirality. This chain is D-aminoacyl-tRNA deacylase, found in Thermotoga petrophila (strain ATCC BAA-488 / DSM 13995 / JCM 10881 / RKU-1).